The chain runs to 968 residues: Sorting nexin-13 (968 aa).

One can recognise a PXA domain in the interval 97–284 (ANIIDEPLQQ…YVIWMIRDSN (188 aa)). An RGS domain is found at 373–496 (PLDSILVDNV…RKVYELMLRD (124 aa)). One can recognise a PX domain in the interval 570-691 (YADYDPYAVA…DFLENKAYSK (122 aa)). Positions 612, 614, 639, and 653 each coordinate a 1,2-diacyl-sn-glycero-3-phospho-(1D-myo-inositol-3-phosphate).

The protein belongs to the sorting nexin family.

Its subcellular location is the early endosome membrane. In terms of biological role, may be involved in several stages of intracellular trafficking. May play a role in endosome homeostasis. Acts as a GAP for Galphas. The protein is Sorting nexin-13 (SNX13) of Homo sapiens (Human).